Here is a 786-residue protein sequence, read N- to C-terminus: Keratin, type I cytoskeletal 9 (786 aa).

The segment at 1-21 (MNCRQFLSSHCSRDSSGGGGG) is disordered. The head stretch occupies residues 1-136 (MNCRQFLSSH…SGAGGILGAD (136 aa)). Serine 52 bears the Phosphoserine mark. The interval 137–172 (EKTTMQDLNSRLASYLDKVQALEDANKELESKIREW) is coil 1A. In terms of domain architecture, IF rod spans 137-449 (EKTTMQDLNS…SLLEGGQEDF (313 aa)). The tract at residues 173 to 191 (YDKQGSRTFHRDYSPYYDT) is linker 1. A coil 1B region spans residues 192 to 283 (IEDLKNQIVN…KNHEDEMSQL (92 aa)). The interval 284–306 (TGQNSGDVNVEMNAAPGRDLTKI) is linker 12. The coil 2 stretch occupies residues 307-445 (LNDMREEYER…KTYRSLLEGG (139 aa)). Residues 446–760 (QEDFESHESG…GGGSGSKGGS (315 aa)) are tail. Residues 447–786 (EDFESHESGQ…DDTQGYHIQY (340 aa)) form a disordered region. Gly residues-rich tracts occupy residues 460–657 (GSGG…GGSG) and 664–761 (SSSG…GGSG). Over residues 762–773 (RSSQVQSSSSKS) the composition is skewed to low complexity.

This sequence belongs to the intermediate filament family. Heterotetramer of two type I and two type II keratins.

In terms of biological role, may serve an important special function either in the mature palmar and plantar skin tissue or in the morphogenetic program of the formation of these tissues. Plays a role in keratin filament assembly. The protein is Keratin, type I cytoskeletal 9 of Canis lupus familiaris (Dog).